Here is a 689-residue protein sequence, read N- to C-terminus: Glycine--tRNA ligase beta subunit (689 aa).

It belongs to the class-II aminoacyl-tRNA synthetase family. As to quaternary structure, tetramer of two alpha and two beta subunits.

It localises to the cytoplasm. The catalysed reaction is tRNA(Gly) + glycine + ATP = glycyl-tRNA(Gly) + AMP + diphosphate. This is Glycine--tRNA ligase beta subunit from Klebsiella pneumoniae (strain 342).